A 92-amino-acid chain; its full sequence is Protein EMB-1 (92 aa).

Composition is skewed to basic and acidic residues over residues 1–16 (MASQ…RARQ), 37–61 (AEGR…EMGR), and 72–92 (GGER…RTKK). Positions 1 to 92 (MASQQEKKEL…IDESKFRTKK (92 aa)) are disordered.

It belongs to the small hydrophilic plant seed protein family. Expressed in embryogenic cells, somatic embryos and seeds at the later stages of development. In the embryos, expressed in the procambium, the root and shoot meristem and the protoderm of the cotyledons. Not detected in the endosperm or the aleurone layer, in young leaves or roots.

Its subcellular location is the nucleus. This Daucus carota (Wild carrot) protein is Protein EMB-1.